We begin with the raw amino-acid sequence, 406 residues long: Exodeoxyribonuclease 7 large subunit (406 aa).

The protein belongs to the XseA family. In terms of assembly, heterooligomer composed of large and small subunits.

Its subcellular location is the cytoplasm. The catalysed reaction is Exonucleolytic cleavage in either 5'- to 3'- or 3'- to 5'-direction to yield nucleoside 5'-phosphates.. In terms of biological role, bidirectionally degrades single-stranded DNA into large acid-insoluble oligonucleotides, which are then degraded further into small acid-soluble oligonucleotides. In Thermobifida fusca (strain YX), this protein is Exodeoxyribonuclease 7 large subunit.